The following is a 551-amino-acid chain: HTH-type transcriptional regulator SgrR (551 aa).

Positions 1-116 (MPSARLQQQF…LVSHLGRSFR (116 aa)) constitute an HTH marR-type domain. Residues 26–49 (LNELAALLSCSRRHMRTLLNTMQD) constitute a DNA-binding region (H-T-H motif). Residues 163–492 (ELEADIAHHW…IDWQADAARW (330 aa)) form a solute-binding region.

Its function is as follows. Activates the small RNA gene sgrS under glucose-phosphate stress conditions as well as yfdZ. Represses its own transcription under both stress and non-stress conditions. Might act as a sensor of the intracellular accumulation of phosphoglucose by binding these molecules in its C-terminal solute-binding domain. This is HTH-type transcriptional regulator SgrR from Shigella boydii serotype 4 (strain Sb227).